The chain runs to 424 residues: MSILIKNGYVIYGDSLKIIKADIYIENNKISKIGKDLTKSADHVIDAKGRVISPGFINAHTHSPMVLLRGLADDISLMEWLQNYVWPVEKKLKRVHIYWGALLGTLEMIKTGTTTFVDMYFHMEEVAKAVEEIGLRAYLSYGMVDLGDEEKRSIEIRETLKLLKFIESLSSPRVEFLFGPHAPYTCSPKLLTWVREKADETGKMITIHLSETKDEVKQIKEKYGKTPVELLDELGFLKNDVIAAHGVWLTDKEIEILAKRDVTIVHNPASNMKLGSGVMSLEKLLKAGVNVALGTDGAASNNNLDMIEEMKLAALLHKVHTLNPTLADAKTVFKMATQNGAKALRLNAGVIKEGALADVIVIDFNKPHLRPITNIISHIVYSANGNDVETTIVDGKVVMLDREVLTIDEEKILDKVQKIVDKLR.

H60 and H62 together coordinate Zn(2+). 2 residues coordinate substrate: E89 and H181. H208 provides a ligand contact to Zn(2+). Residues E211 and D296 each contribute to the substrate site. Position 296 (D296) interacts with Zn(2+).

It belongs to the metallo-dependent hydrolases superfamily. MTA/SAH deaminase family. The cofactor is Zn(2+).

The enzyme catalyses S-adenosyl-L-homocysteine + H2O + H(+) = S-inosyl-L-homocysteine + NH4(+). The catalysed reaction is S-methyl-5'-thioadenosine + H2O + H(+) = S-methyl-5'-thioinosine + NH4(+). Catalyzes the deamination of 5-methylthioadenosine and S-adenosyl-L-homocysteine into 5-methylthioinosine and S-inosyl-L-homocysteine, respectively. Is also able to deaminate adenosine. This Thermococcus sibiricus (strain DSM 12597 / MM 739) protein is 5-methylthioadenosine/S-adenosylhomocysteine deaminase.